The primary structure comprises 536 residues: Phosphoenolpyruvate carboxykinase (ATP) (536 aa).

Residues Arg61, Tyr195, and Lys201 each coordinate substrate. Residues Lys201, His220, and 236–244 contribute to the ATP site; that span reads GLSGTGKTT. Mn(2+)-binding residues include Lys201 and His220. Asp257 is a Mn(2+) binding site. ATP contacts are provided by Glu285, Arg322, and Thr447. Arg322 is a substrate binding site.

The protein belongs to the phosphoenolpyruvate carboxykinase (ATP) family. Mn(2+) serves as cofactor.

The protein localises to the cytoplasm. The enzyme catalyses oxaloacetate + ATP = phosphoenolpyruvate + ADP + CO2. Its pathway is carbohydrate biosynthesis; gluconeogenesis. Functionally, involved in the gluconeogenesis. Catalyzes the conversion of oxaloacetate (OAA) to phosphoenolpyruvate (PEP) through direct phosphoryl transfer between the nucleoside triphosphate and OAA. In Rhizobium leguminosarum bv. trifolii (strain WSM2304), this protein is Phosphoenolpyruvate carboxykinase (ATP).